The following is a 196-amino-acid chain: ATP-dependent Clp protease proteolytic subunit (196 aa).

The active-site Nucleophile is the S101. H126 is an active-site residue.

The protein belongs to the peptidase S14 family. In terms of assembly, component of the chloroplastic Clp protease core complex.

It localises to the plastid. The protein resides in the chloroplast stroma. It catalyses the reaction Hydrolysis of proteins to small peptides in the presence of ATP and magnesium. alpha-casein is the usual test substrate. In the absence of ATP, only oligopeptides shorter than five residues are hydrolyzed (such as succinyl-Leu-Tyr-|-NHMec, and Leu-Tyr-Leu-|-Tyr-Trp, in which cleavage of the -Tyr-|-Leu- and -Tyr-|-Trp bonds also occurs).. Its function is as follows. Cleaves peptides in various proteins in a process that requires ATP hydrolysis. Has a chymotrypsin-like activity. Plays a major role in the degradation of misfolded proteins. The chain is ATP-dependent Clp protease proteolytic subunit from Atropa belladonna (Belladonna).